Here is a 172-residue protein sequence, read N- to C-terminus: Melanocortin-2 receptor accessory protein (172 aa).

The chain crosses the membrane as a helical span at residues Ile38–Leu58. Disordered regions lie at residues Gln105 to Phe136 and Gly151 to Ser172.

Belongs to the MRAP family. In terms of assembly, homodimer and heterodimer. Forms antiparallel homodimers and heterodimers with MRAP2. Interacts with MC1R, MC2R, MC3R, MC4R and MC5R. As to expression, expressed in adrenal cortex, testis, breast, thyroid, lymph node, ovary and fat. Expressed in adipose tissues.

It is found in the cell membrane. It localises to the endoplasmic reticulum membrane. Its function is as follows. Modulator of melanocortin receptors (MC1R, MC2R, MC3R, MC4R and MC5R). Acts by increasing ligand-sensitivity of melanocortin receptors and enhancing generation of cAMP by the receptors. Required both for MC2R trafficking to the cell surface of adrenal cells and for signaling in response to corticotropin (ACTH). May be involved in the intracellular trafficking pathways in adipocyte cells. In Homo sapiens (Human), this protein is Melanocortin-2 receptor accessory protein (MRAP).